We begin with the raw amino-acid sequence, 509 residues long: 2-succinyl-5-enolpyruvyl-6-hydroxy-3-cyclohexene-1-carboxylate synthase (509 aa).

This sequence belongs to the TPP enzyme family. MenD subfamily. Homodimer. Mg(2+) serves as cofactor. Mn(2+) is required as a cofactor. Requires thiamine diphosphate as cofactor.

It carries out the reaction isochorismate + 2-oxoglutarate + H(+) = 5-enolpyruvoyl-6-hydroxy-2-succinyl-cyclohex-3-ene-1-carboxylate + CO2. Its pathway is quinol/quinone metabolism; 1,4-dihydroxy-2-naphthoate biosynthesis; 1,4-dihydroxy-2-naphthoate from chorismate: step 2/7. The protein operates within quinol/quinone metabolism; menaquinone biosynthesis. Functionally, catalyzes the thiamine diphosphate-dependent decarboxylation of 2-oxoglutarate and the subsequent addition of the resulting succinic semialdehyde-thiamine pyrophosphate anion to isochorismate to yield 2-succinyl-5-enolpyruvyl-6-hydroxy-3-cyclohexene-1-carboxylate (SEPHCHC). The polypeptide is 2-succinyl-5-enolpyruvyl-6-hydroxy-3-cyclohexene-1-carboxylate synthase (Corynebacterium diphtheriae (strain ATCC 700971 / NCTC 13129 / Biotype gravis)).